Reading from the N-terminus, the 191-residue chain is uncharacterized protein (191 aa).

A signal peptide spans methionine 1–serine 22.

This is an uncharacterized protein from Escherichia coli (strain K12).